The following is a 186-amino-acid chain: Sec-independent protein translocase protein TatB (186 aa).

The chain crosses the membrane as a helical span at residues 1-21 (MFDIGFSELILLMVLGLVVLG). The interval 162–186 (LSSYYPPDDIEIAPASKSQSSKTKS) is disordered. A compositionally biased stretch (polar residues) spans 177-186 (SKSQSSKTKS).

This sequence belongs to the TatB family. In terms of assembly, the Tat system comprises two distinct complexes: a TatABC complex, containing multiple copies of TatA, TatB and TatC subunits, and a separate TatA complex, containing only TatA subunits. Substrates initially bind to the TatABC complex, which probably triggers association of the separate TatA complex to form the active translocon.

It localises to the cell inner membrane. Part of the twin-arginine translocation (Tat) system that transports large folded proteins containing a characteristic twin-arginine motif in their signal peptide across membranes. Together with TatC, TatB is part of a receptor directly interacting with Tat signal peptides. TatB may form an oligomeric binding site that transiently accommodates folded Tat precursor proteins before their translocation. This chain is Sec-independent protein translocase protein TatB, found in Haemophilus influenzae (strain 86-028NP).